Here is a 732-residue protein sequence, read N- to C-terminus: Inducible ornithine decarboxylase (732 aa).

Lys355 bears the N6-(pyridoxal phosphate)lysine mark.

Belongs to the Orn/Lys/Arg decarboxylase class-I family. Pyridoxal 5'-phosphate is required as a cofactor.

It catalyses the reaction L-ornithine + H(+) = putrescine + CO2. The protein operates within amine and polyamine biosynthesis; putrescine biosynthesis via L-ornithine pathway; putrescine from L-ornithine: step 1/1. The first enzyme leading to putrescine and thus polyamine synthesis. This chain is Inducible ornithine decarboxylase, found in Escherichia coli (strain K12).